The following is a 663-amino-acid chain: Subtilisin-like serine protease (663 aa).

A signal peptide spans 1–23; that stretch reads MKKFGAVVLALFLVGLMAGSVLA. Residues 24 to 136 constitute a propeptide, removed in mature form; the sequence is APQKPAVRNV…IQEDYVVKVA (113 aa). Residues 139–439 form the Peptidase S8 domain; the sequence is TEGLDESAAQ…AGRVNAYKAA (301 aa). Catalysis depends on charge relay system residues aspartate 170, histidine 203, and serine 382. 9 residues coordinate Ca(2+): proline 420, isoleucine 423, aspartate 483, leucine 484, aspartate 485, aspartate 497, tyrosine 498, threonine 501, and glutamate 507. The disordered stretch occupies residues 537–565; sequence VSDGSLGQPSGGGSEPSPSPSPEPTVDEK. The propeptide at 563–663 is removed in mature form; that stretch reads DEKTFTGTVH…YQLDAKVYYG (101 aa).

This sequence belongs to the peptidase S8 family. In terms of assembly, monomer.

The enzyme catalyses Hydrolysis of proteins with broad specificity for peptide bonds, and a preference for a large uncharged residue in P1. Hydrolyzes peptide amides.. Its activity is regulated as follows. Resistant to treatment with 5% SDS, 8 M urea, 10% Triton X-100 or 10% Tween-20. Fully active although less stable in the presence of 10 mM EDTA. Activity not affected by the absence or presence of 10 mM CaCl(2). Unstable in the presence of 2 M or over GdnHCl and loses 35% and 99% of its activity upon incubation with 2 and 4 M GdnHCl, respectively, for 1 hour at 55 degrees Celsius. Nearly fully loses activity upon incubation at pH 2.0. In terms of biological role, serine protease with a broad substrate specificity. In Thermococcus kodakarensis (strain ATCC BAA-918 / JCM 12380 / KOD1) (Pyrococcus kodakaraensis (strain KOD1)), this protein is Subtilisin-like serine protease.